The following is a 378-amino-acid chain: Erythronate-4-phosphate dehydrogenase (378 aa).

Serine 45 and threonine 66 together coordinate substrate. Residues aspartate 146 and threonine 175 each contribute to the NAD(+) site. Residue arginine 208 is part of the active site. Aspartate 232 serves as a coordination point for NAD(+). Glutamate 237 is a catalytic residue. Residue histidine 254 is the Proton donor of the active site. Glycine 257 contacts NAD(+). Tyrosine 258 lines the substrate pocket.

Belongs to the D-isomer specific 2-hydroxyacid dehydrogenase family. PdxB subfamily. In terms of assembly, homodimer.

The protein resides in the cytoplasm. It catalyses the reaction 4-phospho-D-erythronate + NAD(+) = (R)-3-hydroxy-2-oxo-4-phosphooxybutanoate + NADH + H(+). The protein operates within cofactor biosynthesis; pyridoxine 5'-phosphate biosynthesis; pyridoxine 5'-phosphate from D-erythrose 4-phosphate: step 2/5. Catalyzes the oxidation of erythronate-4-phosphate to 3-hydroxy-2-oxo-4-phosphonooxybutanoate. This chain is Erythronate-4-phosphate dehydrogenase, found in Salmonella agona (strain SL483).